A 194-amino-acid polypeptide reads, in one-letter code: 7-methyl-GTP pyrophosphatase (194 aa).

The active-site Proton acceptor is the aspartate 70.

Belongs to the Maf family. YceF subfamily. A divalent metal cation serves as cofactor.

The protein resides in the cytoplasm. The enzyme catalyses N(7)-methyl-GTP + H2O = N(7)-methyl-GMP + diphosphate + H(+). Nucleoside triphosphate pyrophosphatase that hydrolyzes 7-methyl-GTP (m(7)GTP). May have a dual role in cell division arrest and in preventing the incorporation of modified nucleotides into cellular nucleic acids. This Vibrio vulnificus (strain YJ016) protein is 7-methyl-GTP pyrophosphatase.